Here is a 334-residue protein sequence, read N- to C-terminus: Short-chain dehydrogenase/reductase (334 aa).

NADP(+)-binding residues include Leu-44, Lys-68, Asp-93, Asn-120, and Lys-152. Catalysis depends on proton donor residues Ser-176 and Tyr-205. Residues Tyr-205, Lys-209, and Asn-239 each contribute to the NADP(+) site. Residue Lys-209 is the Lowers pKa of active site Tyr of the active site.

It belongs to the short-chain dehydrogenases/reductases (SDR) family.

Its pathway is mycotoxin biosynthesis. In terms of biological role, short-chain dehydrogenase/reductase; part of the 2 gene clusters that mediate the biosynthesis of fusicoccins, diterpene glucosides that display phytohormone-like activity and function as potent activators of plasma membrane H(+)-ATPases in plants by modifying 14-3-3 proteins and cause the plant disease constriction canker. The first step in the pathway is performed by the fusicoccadiene synthase PaFS that possesses both prenyl transferase and terpene cyclase activity, converting isopentenyl diphosphate and dimethylallyl diphosphate into geranylgeranyl diphosphate (GGDP) and successively converting GGDP into fusicocca-2,10(14)-diene, a precursor for fusicoccin H. The second step is the oxidation at the C-8 position by the cytochrome P450 monooxygenase PaP450-2 to yield fusicocca-2,10(14)-diene-8-beta-ol. The cytochrome P450 monooxygenase PaP450-1 then catalyzes the hydroxylation at the C-16 position to produce fusicocca-2,10(14)-diene-8-beta,16-diol. The dioxygenase fc-dox then catalyzes the 16-oxydation of fusicocca-2,10(14)-diene-8-beta,16-diol to yield an aldehyde (8-beta-hydroxyfusicocca-1,10(14)-dien-16-al). The short-chain dehydrogenase/reductase fc-sdr catalyzes the reduction of the aldehyde to yield fusicocca-1,10(14)-diene-8-beta,16-diol. The next step is the hydroxylation at C-9 performed by the cytochrome P450 monooxygenase PaP450-3 that leads to fusicoccin H aglycon which is glycosylated to fusicoccin H by the O-glycosyltransferase PaGT. Hydroxylation at C-12 by the cytochrome P450 monooxygenase PaP450-4 leads then to the production of fusicoccin Q and is followed by methylation by the O-methyltransferase PaMT to yield fusicoccin P. Fusicoccin P is further converted to fusicoccin J via prenylation by the O-glucose prenyltransferase PaPT. Cytochrome P450 monooxygenase PaP450-5 then performs hydroxylation at C-19 to yield dideacetyl-fusicoccin A which is acetylated to 3'-O-deacetyl-fusicoccin A by the O-acetyltransferase PaAT-2. Finally, a another acetylation by the O-acetyltransferase PaAT-1 yields fusicoccin A. This is Short-chain dehydrogenase/reductase from Phomopsis amygdali (Fusicoccum amygdali).